The following is a 74-amino-acid chain: M-myrmeciitoxin-Mb1a (74 aa).

The signal sequence occupies residues 1-26 (MKLSCLLLTLAIIVVLTIVHAPNVEA). Residues 27-50 (KALADPESDAVGFADAVGEADPNA) constitute a propeptide that is removed on maturation. At Gln-73 the chain carries Glutamine amide.

The protein belongs to the formicidae venom precursor-01 superfamily. Ant pilosulin family. In terms of tissue distribution, expressed by the venom gland.

It is found in the secreted. Shows moderate activity against E.coli and S.aureus (MIC&lt;25 uM), slight activity against B.subtilis (MIC&lt;50 uM), and no activity against L.garvieae, P.aeruginosa, C.albicans, and S.cerevisiae. Has no hemolytic nor cytolytic activity. Causes an IgE-independent histamine release. This is M-myrmeciitoxin-Mb1a from Myrmecia banksi (Jack jumper ant).